A 463-amino-acid polypeptide reads, in one-letter code: MPGMEYSTVSKIYGPLMIVQGVKGVAYGEVVEIETESGEKRKGQVLEAREDMAIVQVFEGTRDLDIKTTRVRFTGETLKVPVSMDMLGRIFNGIGKPIDGGPEIIPEDRRDVHGAPLNPVARAYPRDFIQTGISAIDGMNTLVRGQKLPIFSGSGLPHNMLAAQIARQAKVLGEEEQFAVVFAAMGITYEEANFFKKSFEETGAIERAVLFLNLADDPAIERIITPRMALTVAEYLAFDYDMQVLVILTDMTNYAEALREISAAREEVPGRRGYPGYMYTDLATIYERAGRVRGKKGSITQMPILTMPDDDITHPIPDLTGYITEGQIVLSRELHRKGIYPPIDVLPSLSRLMKDGIGKGRTREDHPQLSQQLYAAYAEGRSLRDLVAVVGEEALSETDRKYLKFADRFEREFVAQRYDEDRSIFETLDLGWELLAELPESELKRVRKEYILKYHPKYRKRGE.

This sequence belongs to the ATPase alpha/beta chains family. Has multiple subunits with at least A(3), B(3), C, D, E, F, H, I and proteolipid K(x).

It localises to the cell membrane. In terms of biological role, component of the A-type ATP synthase that produces ATP from ADP in the presence of a proton gradient across the membrane. The B chain is a regulatory subunit. The protein is A-type ATP synthase subunit B of Thermococcus sp. (strain KI).